A 265-amino-acid chain; its full sequence is RNA polymerase sigma factor SigI2 (265 aa).

Residues 71-84 carry the Polymerase core binding motif; it reads DEFSVGLAAFNEAI. The H-T-H motif DNA-binding region spans 211-230; that stretch reads KTELLKLLKINKKTIERNRT.

Belongs to the sigma-70 factor family. SigI subfamily. As to quaternary structure, interacts with RsgI2.

Its subcellular location is the cytoplasm. Its activity is regulated as follows. Negatively regulated by the anti-sigma-I factor RsgI2. Binding of the polysaccharide substrate to RsgI2 may lead to the release and activation of SigI2. Functionally, sigma factors are initiation factors that promote the attachment of RNA polymerase to specific initiation sites and are then released. This sigma factor is involved in regulation of cellulosomal genes via an external polysaccharide-sensing mechanism. The chain is RNA polymerase sigma factor SigI2 from Acetivibrio thermocellus (strain ATCC 27405 / DSM 1237 / JCM 9322 / NBRC 103400 / NCIMB 10682 / NRRL B-4536 / VPI 7372) (Clostridium thermocellum).